Reading from the N-terminus, the 96-residue chain is Co-chaperonin GroES (96 aa).

It belongs to the GroES chaperonin family. Heptamer of 7 subunits arranged in a ring. Interacts with the chaperonin GroEL.

It is found in the cytoplasm. Together with the chaperonin GroEL, plays an essential role in assisting protein folding. The GroEL-GroES system forms a nano-cage that allows encapsulation of the non-native substrate proteins and provides a physical environment optimized to promote and accelerate protein folding. GroES binds to the apical surface of the GroEL ring, thereby capping the opening of the GroEL channel. The chain is Co-chaperonin GroES from Cupriavidus taiwanensis (strain DSM 17343 / BCRC 17206 / CCUG 44338 / CIP 107171 / LMG 19424 / R1) (Ralstonia taiwanensis (strain LMG 19424)).